Consider the following 234-residue polypeptide: Small ribosomal subunit protein uS2 (234 aa).

Belongs to the universal ribosomal protein uS2 family.

This is Small ribosomal subunit protein uS2 from Prochlorococcus marinus subsp. pastoris (strain CCMP1986 / NIES-2087 / MED4).